The following is a 623-amino-acid chain: 1-butanol dehydrogenase (quinone) (623 aa).

Residues 1–28 (MKKSHAKPFALRAIVVATAAALSLPAAA) form the signal peptide. Aspartate 40, threonine 43, and aspartate 46 together coordinate Ca(2+). Glutamate 90 serves as a coordination point for pyrroloquinoline quinone. Cysteine 134 and cysteine 135 are oxidised to a cystine. Pyrroloquinoline quinone contacts are provided by residues arginine 140, threonine 184, and 202–204 (HGS). Ca(2+) is bound at residue glutamate 208. Residues 235–274 (HMGRLNGKDSTPTGDPKAPSWPDDPNSPTGKVEAWSQGGG) are disordered. Residues asparagine 295 and aspartate 345 each contribute to the Ca(2+) site. The Proton acceptor role is filled by aspartate 345. Arginine 374 serves as a coordination point for pyrroloquinoline quinone. Positions 420–440 (GKPIEKDNRPPQPKEGADKGE) are disordered. Alanine 592 serves as a coordination point for pyrroloquinoline quinone.

The protein belongs to the bacterial PQQ dehydrogenase family. It depends on pyrroloquinoline quinone as a cofactor. Ca(2+) is required as a cofactor.

Its subcellular location is the periplasm. The catalysed reaction is butan-1-ol + a quinone = butanal + a quinol. Involved in the metabolism of butane. May function primarily in energy generation. Catalyzes the oxidation of 1-butanol to 1-butanal. Also able to use 2-butanol and butyraldehyde, although the affinity is comparatively low. The polypeptide is 1-butanol dehydrogenase (quinone) (Thauera butanivorans (strain ATCC 43655 / DSM 2080 / JCM 20651 / CCUG 51053 / NBRC 103042 / IAM 12574 / Bu B1211) (Pseudomonas butanovora)).